A 276-amino-acid chain; its full sequence is Aspartate dehydrogenase domain-containing protein (276 aa).

It belongs to the L-aspartate dehydrogenase family.

This is Aspartate dehydrogenase domain-containing protein (aspdh) from Danio rerio (Zebrafish).